Reading from the N-terminus, the 289-residue chain is Dermonecrotic toxin LarSicTox-betaID1 (289 aa).

A signal peptide spans 1 to 2 (EG). The propeptide occupies 3-11 (AEQDGSERT). His22 is an active-site residue. Glu42 and Asp44 together coordinate Mg(2+). His58 functions as the Nucleophile in the catalytic mechanism. 2 disulfide bridges follow: Cys62–Cys68 and Cys64–Cys207. Position 102 (Asp102) interacts with Mg(2+).

This sequence belongs to the arthropod phospholipase D family. Class II subfamily. Mg(2+) is required as a cofactor. Expressed by the venom gland.

The protein localises to the secreted. The catalysed reaction is an N-(acyl)-sphingosylphosphocholine = an N-(acyl)-sphingosyl-1,3-cyclic phosphate + choline. The enzyme catalyses N-hexanoyl-sphing-4-enine-1-phosphocholine = N-(hexanoyl)-sphing-4-enine-1,3-cyclic phosphate + choline. It carries out the reaction N-(dodecanoyl)-sphing-4-enine-1-phosphocholine = N-dodecanoyl-sphing-4-enine-1,3-cyclic phosphate + choline. It catalyses the reaction an N-(acyl)-sphingosylphosphoethanolamine = an N-(acyl)-sphingosyl-1,3-cyclic phosphate + ethanolamine. The catalysed reaction is N-dodecanoyl-heptadecasphing-4-enine-1-phosphoethanolamine = N-dodecanoyl-heptadecasphing-4-enine-1,3-cyclic phosphate + ethanolamine. The enzyme catalyses a 1-acyl-sn-glycero-3-phosphocholine = a 1-acyl-sn-glycero-2,3-cyclic phosphate + choline. It carries out the reaction 1-tetradecanoyl-sn-glycero-3-phosphocholine = 1-tetradecanoyl-sn-glycero-2,3-cyclic phosphate + choline. It catalyses the reaction 1-octanoyl-sn-glycero-3-phosphocholine = 1-octanoyl-sn-glycero-2,3-cyclic phosphate + choline. The catalysed reaction is a 1-acyl-sn-glycero-3-phosphoethanolamine = a 1-acyl-sn-glycero-2,3-cyclic phosphate + ethanolamine. The enzyme catalyses 1-tetradecanoyl-sn-glycero-3-phosphoethanolamine = 1-tetradecanoyl-sn-glycero-2,3-cyclic phosphate + ethanolamine. Functionally, dermonecrotic toxins cleave the phosphodiester linkage between the phosphate and headgroup of certain phospholipids (sphingolipid and lysolipid substrates), forming an alcohol (often choline) and a cyclic phosphate. This toxin acts on sphingomyelin (SM) and on ceramide phosphoethanolamine (CPE) with high activity. It also acts on lysophosphatidylcholine (LPC) and on lysophosphatidylethanolamine (LPE) with moderate activity. It is not active on lysophosphatidylserine (LPS), and lysophosphatidylglycerol (LPG). It acts by transphosphatidylation, releasing exclusively cyclic phosphate as second products. It is not surprising that spider toxins have affinity for ethanolamine-containing sphingolipids since they are common in insect prey. On mammals, induces dermonecrosis, hemolysis, increased vascular permeability, edema, inflammatory response, and platelet aggregation. The protein is Dermonecrotic toxin LarSicTox-betaID1 of Loxosceles arizonica (Arizona brown spider).